Reading from the N-terminus, the 97-residue chain is Large ribosomal subunit protein bL28 (97 aa).

It belongs to the bacterial ribosomal protein bL28 family.

The polypeptide is Large ribosomal subunit protein bL28 (Sphingopyxis alaskensis (strain DSM 13593 / LMG 18877 / RB2256) (Sphingomonas alaskensis)).